The following is a 239-amino-acid chain: Small ribosomal subunit protein uS5 (239 aa).

The interval 1–62 is disordered; that stretch reads MADETEIQAA…DDRRGSEEQG (62 aa). Low complexity predominate over residues 9–19; it reads AAAPAEAAPGA. Over residues 34–62 the composition is skewed to basic and acidic residues; it reads GGNDRGGDRGRGRDGRGRRDDRRGSEEQG. Positions 65-128 constitute an S5 DRBM domain; that stretch reads LIEKLVHINR…AAAKKAMVRV (64 aa).

This sequence belongs to the universal ribosomal protein uS5 family. Part of the 30S ribosomal subunit. Contacts proteins S4 and S8.

In terms of biological role, with S4 and S12 plays an important role in translational accuracy. Located at the back of the 30S subunit body where it stabilizes the conformation of the head with respect to the body. In Rhizorhabdus wittichii (strain DSM 6014 / CCUG 31198 / JCM 15750 / NBRC 105917 / EY 4224 / RW1) (Sphingomonas wittichii), this protein is Small ribosomal subunit protein uS5.